Here is a 292-residue protein sequence, read N- to C-terminus: NAD kinase (292 aa).

Residue Asp-73 is the Proton acceptor of the active site. NAD(+)-binding positions include 73–74 (DG), 147–148 (NE), His-158, Arg-175, Asp-177, 188–193 (TAYSLS), and Gln-247.

It belongs to the NAD kinase family. The cofactor is a divalent metal cation.

The protein resides in the cytoplasm. It carries out the reaction NAD(+) + ATP = ADP + NADP(+) + H(+). Functionally, involved in the regulation of the intracellular balance of NAD and NADP, and is a key enzyme in the biosynthesis of NADP. Catalyzes specifically the phosphorylation on 2'-hydroxyl of the adenosine moiety of NAD to yield NADP. This Shigella boydii serotype 18 (strain CDC 3083-94 / BS512) protein is NAD kinase.